The chain runs to 259 residues: Phosphatidylserine decarboxylase proenzyme (259 aa).

Serine 183 (schiff-base intermediate with substrate; via pyruvic acid) is an active-site residue. Serine 183 carries the pyruvic acid (Ser); by autocatalysis modification.

The protein belongs to the phosphatidylserine decarboxylase family. PSD-A subfamily. Heterodimer of a large membrane-associated beta subunit and a small pyruvoyl-containing alpha subunit. It depends on pyruvate as a cofactor. In terms of processing, is synthesized initially as an inactive proenzyme. Formation of the active enzyme involves a self-maturation process in which the active site pyruvoyl group is generated from an internal serine residue via an autocatalytic post-translational modification. Two non-identical subunits are generated from the proenzyme in this reaction, and the pyruvate is formed at the N-terminus of the alpha chain, which is derived from the carboxyl end of the proenzyme. The post-translation cleavage follows an unusual pathway, termed non-hydrolytic serinolysis, in which the side chain hydroxyl group of the serine supplies its oxygen atom to form the C-terminus of the beta chain, while the remainder of the serine residue undergoes an oxidative deamination to produce ammonia and the pyruvoyl prosthetic group on the alpha chain.

It is found in the cell membrane. The catalysed reaction is a 1,2-diacyl-sn-glycero-3-phospho-L-serine + H(+) = a 1,2-diacyl-sn-glycero-3-phosphoethanolamine + CO2. It participates in phospholipid metabolism; phosphatidylethanolamine biosynthesis; phosphatidylethanolamine from CDP-diacylglycerol: step 2/2. Functionally, catalyzes the formation of phosphatidylethanolamine (PtdEtn) from phosphatidylserine (PtdSer). This Neisseria gonorrhoeae (strain NCCP11945) protein is Phosphatidylserine decarboxylase proenzyme.